Consider the following 307-residue polypeptide: Geranylgeranyl diphosphate synthase (307 aa).

Isopentenyl diphosphate-binding residues include Lys52, Arg55, and His86. 2 residues coordinate Mg(2+): Asp93 and Asp99. Arg104 is a binding site for (2E,6E)-farnesyl diphosphate. An isopentenyl diphosphate-binding site is contributed by Arg105. Residues Lys188, Thr189, and Gln226 each coordinate (2E,6E)-farnesyl diphosphate.

Belongs to the FPP/GGPP synthase family. Mg(2+) serves as cofactor.

It catalyses the reaction isopentenyl diphosphate + (2E,6E)-farnesyl diphosphate = (2E,6E,10E)-geranylgeranyl diphosphate + diphosphate. The protein operates within isoprenoid biosynthesis; geranylgeranyl diphosphate biosynthesis; geranylgeranyl diphosphate from farnesyl diphosphate and isopentenyl diphosphate: step 1/1. In terms of biological role, catalyzes the condensation of farnesyl diphosphate (FPP) and isopentenyl diphosphate (IPP) to yield geranylgeranyl diphosphate (GGPP) needed for biosynthesis of carotenoids and diterpenes. The polypeptide is Geranylgeranyl diphosphate synthase (crtE) (Pseudescherichia vulneris (Escherichia vulneris)).